The following is a 69-amino-acid chain: Mu-conotoxin-like Am3.3 (69 aa).

Residues 1-20 (MMSKLGVLLTICLLLFPLTA) form the signal peptide. Positions 21–52 (VPLDGDQPADRPAERMQDDISSENHPMFDAIR) are excised as a propeptide. Cysteine amide is present on Cys68.

It belongs to the conotoxin M family. In terms of processing, is not hydroxylated. Contains 3 disulfide bonds. In terms of tissue distribution, expressed by the venom duct.

It is found in the secreted. Mu-conotoxins block voltage-gated sodium channels (Nav). The polypeptide is Mu-conotoxin-like Am3.3 (Conus amadis (Amadis cone)).